The primary structure comprises 160 residues: Small ribosomal subunit protein uS9 (160 aa).

Belongs to the universal ribosomal protein uS9 family.

The sequence is that of Small ribosomal subunit protein uS9 from Rhodopseudomonas palustris (strain ATCC BAA-98 / CGA009).